The following is a 346-amino-acid chain: Elongation factor Ts (346 aa).

The segment at 80 to 83 is involved in Mg(2+) ion dislocation from EF-Tu; sequence TDFV.

This sequence belongs to the EF-Ts family.

Its subcellular location is the cytoplasm. Its function is as follows. Associates with the EF-Tu.GDP complex and induces the exchange of GDP to GTP. It remains bound to the aminoacyl-tRNA.EF-Tu.GTP complex up to the GTP hydrolysis stage on the ribosome. This chain is Elongation factor Ts, found in Streptococcus pyogenes serotype M3 (strain ATCC BAA-595 / MGAS315).